The following is a 156-amino-acid chain: Succinate dehydrogenase assembly factor 2-B, mitochondrial (156 aa).

A mitochondrion-targeting transit peptide spans 1–12 (MLRQILSSAVAK).

Belongs to the SDHAF2 family. Interacts with the flavoprotein subunit within the SDH catalytic dimer.

Its subcellular location is the mitochondrion matrix. Functionally, plays an essential role in the assembly of succinate dehydrogenase (SDH), an enzyme complex (also referred to as respiratory complex II) that is a component of both the tricarboxylic acid (TCA) cycle and the mitochondrial electron transport chain, and which couples the oxidation of succinate to fumarate with the reduction of ubiquinone (coenzyme Q) to ubiquinol. Required for flavinylation (covalent attachment of FAD) of the flavoprotein subunit of the SDH catalytic dimer. The chain is Succinate dehydrogenase assembly factor 2-B, mitochondrial from Drosophila willistoni (Fruit fly).